The sequence spans 401 residues: Protein zntC (401 aa).

Transmembrane regions (helical) follow at residues 33-53, 61-81, and 114-134; these read GGLIAGIFVLTLTASFVPWFL, LVSVVSILTCLSAGVIIGAGF, and ITIVTMFALICVDKILVSGGL. The disordered stretch occupies residues 141–247; sequence NHMDLSQHNH…SHKDEKDSEK (107 aa). Over residues 167 to 184 the composition is skewed to acidic residues; it reads GDDDDDDVNEDQEEDSTK. The segment covering 200–209 has biased composition (low complexity); it reads HNSSNSSSNG. A compositionally biased stretch (basic residues) spans 212–225; that stretch reads HGLKKKKKSKKEHG. Residues 226-247 are compositionally biased toward basic and acidic residues; it reads HGHNHDHSSNGHSHKDEKDSEK. 5 helical membrane-spanning segments follow: residues 256–276, 285–305, 316–336, 351–371, and 381–401; these read AWVFLVALSLHSIFDGLGLGS, GLLIAVLAHKFLDGLVLGIAI, CIALVFAAAMTPLGIGIGMAI, GIILSITCGSFIYISLIELLP, and KLKLAVAFLGYSVMAILALWV.

The protein belongs to the ZIP transporter (TC 2.A.5) family.

The protein localises to the membrane. May transport divalent cations. May participate, with dstA, in the regulation of the differentiation of stalk cells during development. The polypeptide is Protein zntC (zntC) (Dictyostelium discoideum (Social amoeba)).